The chain runs to 397 residues: MAKQKFERTKPHVNIGTIGHIDHGKTTLTAAITKVLHDAHPDLNPFTPFDQIDKAPEEKARGITISIAHVEYQTDARHYAHVDCPGHADYIKNMITGAAQMDGAILVVSATDGPMPQTKEHVLLARQVGVPYIVVALNKADMVDDEEILELVELEVRELLNTYEFPGDDVPVIRVSALKALEGDKEWGEKLLELMAAVDASIPEPERDIDRPFLMPIEDVFTITGRGTVVTGRIERGIVKVNETVEIVGIKPETTTTTVTGVEMFRKLLDEGQAGDNVGLLLRGIKREDVERGQVIVKPKSITPHTVFEARVYILNKDEGGRHTPFFKNYRPQFYFRTTDVTGVVTLPEGTEMVMPGDNTEMTVELIQPIAMEEGLRFAIREGGRTVGAGQVLKVIK.

The tr-type G domain maps to 10–206; sequence KPHVNIGTIG…AVDASIPEPE (197 aa). Residues 19–26 are G1; sequence GHIDHGKT. A GTP-binding site is contributed by 19-26; it reads GHIDHGKT. Residue Thr26 participates in Mg(2+) binding. The segment at 62–66 is G2; that stretch reads GITIS. The tract at residues 83 to 86 is G3; sequence DCPG. Residues 83-87 and 138-141 contribute to the GTP site; these read DCPGH and NKAD. The interval 138–141 is G4; sequence NKAD. Positions 176–178 are G5; that stretch reads SAL.

It belongs to the TRAFAC class translation factor GTPase superfamily. Classic translation factor GTPase family. EF-Tu/EF-1A subfamily. As to quaternary structure, monomer.

It localises to the cytoplasm. It carries out the reaction GTP + H2O = GDP + phosphate + H(+). Its function is as follows. GTP hydrolase that promotes the GTP-dependent binding of aminoacyl-tRNA to the A-site of ribosomes during protein biosynthesis. This Parafrankia sp. (strain EAN1pec) protein is Elongation factor Tu.